Here is an 875-residue protein sequence, read N- to C-terminus: Alanine--tRNA ligase (875 aa).

Zn(2+) is bound by residues histidine 564, histidine 568, cysteine 666, and histidine 670.

The protein belongs to the class-II aminoacyl-tRNA synthetase family. As to quaternary structure, homotetramer. The cofactor is Zn(2+).

The protein localises to the cytoplasm. It catalyses the reaction tRNA(Ala) + L-alanine + ATP = L-alanyl-tRNA(Ala) + AMP + diphosphate. Functionally, catalyzes the attachment of alanine to tRNA(Ala) in a two-step reaction: alanine is first activated by ATP to form Ala-AMP and then transferred to the acceptor end of tRNA(Ala). Also edits incorrectly charged Ser-tRNA(Ala) and Gly-tRNA(Ala) via its editing domain. This chain is Alanine--tRNA ligase, found in Yersinia pseudotuberculosis serotype IB (strain PB1/+).